We begin with the raw amino-acid sequence, 259 residues long: Isoepoxydon dehydrogenase patN (259 aa).

Asn96 and Arg125 together coordinate NADP(+). Catalysis depends on proton donor residues Ser143 and Ser144. NADP(+)-binding residues include Tyr158, Lys162, and Ile191. The Proton acceptor role is filled by Tyr158. The active-site Lowers pKa of active site Tyr is the Lys162.

This sequence belongs to the short-chain dehydrogenases/reductases (SDR) family.

Its subcellular location is the cytoplasm. The protein resides in the cytosol. It catalyses the reaction isoepoxydon + NADP(+) = phyllostine + NADPH + H(+). The protein operates within mycotoxin biosynthesis; patulin biosynthesis. Its function is as follows. Isoepoxydon dehydrogenase; part of the gene cluster that mediates the biosynthesis of patulin, an acetate-derived tetraketide mycotoxin produced by several fungal species that shows antimicrobial properties against several bacteria. PatN catalyzes the conversion of isoepoxydon into phyllostine. The pathway begins with the synthesis of 6-methylsalicylic acid by the polyketide synthase (PKS) patK via condensation of acetate and malonate units. The 6-methylsalicylic acid decarboxylase patG then catalyzes the decarboxylation of 6-methylsalicylic acid to yield m-cresol (also known as 3-methylphenol). These first reactions occur in the cytosol. The intermediate m-cresol is then transported into the endoplasmic reticulum where the cytochrome P450 monooxygenase patH converts it to m-hydroxybenzyl alcohol, which is further converted to gentisyl alcohol by the cytochrome P450 monooxygenase patI. The oxidoreductases patJ and patO further convert gentisyl alcohol to isoepoxydon in the vacuole. PatN catalyzes then the transformation of isoepoxydon into phyllostine. The cluster protein patF is responsible for the conversion from phyllostine to neopatulin whereas the alcohol dehydrogenase patD converts neopatulin to E-ascladiol. The steps between isoepoxydon and E-ascladiol occur in the cytosol, and E-ascladiol is probably secreted to the extracellular space by one of the cluster-specific transporters patC or patM. Finally, the secreted patulin synthase patE catalyzes the conversion of E-ascladiol to patulin. This Aspergillus clavatus (strain ATCC 1007 / CBS 513.65 / DSM 816 / NCTC 3887 / NRRL 1 / QM 1276 / 107) protein is Isoepoxydon dehydrogenase patN.